A 558-amino-acid polypeptide reads, in one-letter code: Factor VII-activating protease (558 aa).

The signal sequence occupies residues 1 to 23; the sequence is MFARMSDLHVLLLMVLAGKTAFG. The N-linked (GlcNAc...) asparagine glycan is linked to N54. EGF-like domains are found at residues 71–107, 109–146, and 148–186; these read EDDP…NRCQ, VQNK…SDCS, and VVPV…KLCE. 18 disulfide bridges follow: C75/C86, C80/C95, C97/C106, C113/C123, C118/C134, C136/C145, C152/C163, C157/C174, C176/C185, C192/C274, C213/C255, C244/C269, C299/C433, C345/C361, C353/C422, C445/C513, C475/C491, and C503/C531. The region spanning 191 to 274 is the Kringle domain; it reads DCYVDDGYSY…KWEYCDVPAC (84 aa). One can recognise a Peptidase S1 domain in the interval 312–553; it reads IFGGFKSTAG…FLTWIKATME (242 aa). Residues H360 and D409 each act as charge relay system in the active site. S507 serves as the catalytic Charge relay system.

This sequence belongs to the peptidase S1 family. Heterodimer; disulfide-linked. Heterodimer of a 50 kDa heavy and a 27 kDa light chain linked by a disulfide bond. In terms of processing, proteolytic cleavage at Gly-23 or Leu-27 can give rise to the 50 kDa heavy chain (HC) and cleavage at Arg-311 or Lys-317 can give rise to the 27 kDa light chain (LC). The HC can undergo further proteolytic cleavage giving rise to a 26 kDa fragment. The LC can undergo further proteolytic cleavage at Arg-311 leading to a 17-kDa fragment and at Arg-478 leading to a 8-kDa fragment.

The protein localises to the secreted. Functionally, cleaves the alpha-chain at multiple sites and the beta-chain between 'Lys-53' and 'Lys-54' but not the gamma-chain of fibrinogen and therefore does not initiate the formation of the fibrin clot and does not cause the fibrinolysis directly. It does not cleave (activate) prothrombin and plasminogen but converts the inactive single chain urinary plasminogen activator (pro-urokinase) to the active two chain form. Activates coagulation factor VII. May function as a tumor suppressor negatively regulating cell proliferation and cell migration. This is Factor VII-activating protease (HABP2) from Bos taurus (Bovine).